The sequence spans 399 residues: Probable F-box protein At4g22060 (399 aa).

Positions 12–48 constitute an F-box domain; it reads SWSKLPLDLLIMVFERLGFVDFQRTKSVCLAWLYASR.

The sequence is that of Probable F-box protein At4g22060 from Arabidopsis thaliana (Mouse-ear cress).